Reading from the N-terminus, the 191-residue chain is Transcription factor HES-2 (191 aa).

Residues methionine 1–serine 26 form a disordered region. Positions leucine 28–isoleucine 85 constitute a bHLH domain. One can recognise an Orange domain in the interval tyrosine 97–leucine 130. Polar residues-rich tracts occupy residues arginine 159–serine 173 and glutamine 182–tryptophan 191. The segment at arginine 159–tryptophan 191 is disordered. The short motif at tryptophan 188–tryptophan 191 is the WRPW motif element.

As to quaternary structure, transcription repression requires formation of a complex with a corepressor protein of the Groucho/TLE family. Homodimer, and heterodimer with the other bHLH proteins neurod1, neurod4/ath3, hes1/hairy1 and hes6r. Weakly interacts with the bHLH protein hey1/hrt1. Expressed in the animal half of the early cleavage stage embryo. During neurulation and organogenesis, the otic vesicles and retina are the main sites of expression; expression in otic placodes begins as early as stage 13.5, persisting in the otic vesicles at stage 30 and beyond. Also transiently expressed in the olfactory placodes. In addition, weakly expressed in primary neurons. Expression in the retina begins at stage 21, and is seen throughout the neural retina by stage 30. From stage 35 onwards, expression progressively declines in the central retina, while remaining high in the margins. At stage 41, expression becomes restricted to the ciliary marginal zone (CMZ) of the retina, the only region where retinogenesis is still occurring.

The protein resides in the nucleus. Functionally, transcriptional repressor. Essential in the retina to govern glial versus neuronal differentiation. Promotes gliogenesis through the inhibition of neuronal differentiation by at least two distinct mechanisms; represses proneural gene transcription, and also physically interacts with proneural proteins, including neurod1. The sequence is that of Transcription factor HES-2 (hes2) from Xenopus laevis (African clawed frog).